Consider the following 1088-residue polypeptide: RNA-directed RNA polymerase (1088 aa).

The RdRp catalytic domain occupies 501–687 (LSYGDVTRFL…AKRYIAGGKI (187 aa)).

It belongs to the reoviridae RNA-directed RNA polymerase family. Interacts with VP3 (Potential). Interacts with VP2; this interaction activates VP1. Interacts with NSP5; this interaction is probably necessary for the formation of functional virus factories. Interacts with NSP2; this interaction is weak. Requires Mg(2+) as cofactor.

It is found in the virion. It catalyses the reaction RNA(n) + a ribonucleoside 5'-triphosphate = RNA(n+1) + diphosphate. Its function is as follows. RNA-directed RNA polymerase that is involved in both transcription and genome replication. Together with VP3 capping enzyme, forms an enzyme complex positioned near the channels situated at each of the five-fold vertices of the core. Following infection, the outermost layer of the virus is lost, leaving a double-layered particle (DLP) made up of the core and VP6 shell. VP1 then catalyzes the transcription of fully conservative plus-strand genomic RNAs that are extruded through the DLP's channels into the cytoplasm where they function as mRNAs for translation of viral proteins. One copy of each of the viral (+)RNAs is also recruited during core assembly, together with newly synthesized polymerase complexes and VP2. The polymerase of these novo-formed particles catalyzes the synthesis of complementary minus-strands leading to dsRNA formation. To do so, the polymerase specifically recognizes and binds 4 bases 5'-UGUG-3' in the conserved 3'-sequence of plus-strand RNA templates. VP2 presumably activates the autoinhibited VP1-RNA complex to coordinate packaging and genome replication. Once dsRNA synthesis is complete, the polymerase switches to the transcriptional mode, thus providing secondary transcription. The sequence is that of RNA-directed RNA polymerase from Rotavirus A (strain RVA/Human/Philippines/L26/1987/G12P1B[4]) (RV-A).